Reading from the N-terminus, the 58-residue chain is U8-ctenitoxin-Pr1a (58 aa).

Disulfide bonds link C2-C16, C9-C22, C15-C40, C24-C38, and C48-C55.

Expressed by the venom gland.

It is found in the secreted. No toxic effects on mice at dose levels of 5 ug per mouse. May be toxic to insects. The chain is U8-ctenitoxin-Pr1a from Phoneutria reidyi (Brazilian Amazonian armed spider).